Consider the following 231-residue polypeptide: Elongation factor 1-delta 1 (231 aa).

An N-acetylalanine modification is found at Ala-2. The region spanning 10–73 is the GST C-terminal domain; it reads DAGLKKLDEH…LRISGVSAEG (64 aa). Disordered regions lie at residues 85 to 108 and 116 to 135; these read TEEA…EDDD and ETEE…KAST. The segment covering 119 to 129 has biased composition (basic and acidic residues); sequence EEKKAAEERAA.

This sequence belongs to the EF-1-beta/EF-1-delta family. As to quaternary structure, EF-1 is composed of 4 subunits: alpha, beta (1B-alpha=beta'), delta (1B-beta), and gamma (1B-gamma).

EF-1-beta and EF-1-delta stimulate the exchange of GDP bound to EF-1-alpha to GTP. The polypeptide is Elongation factor 1-delta 1 (Arabidopsis thaliana (Mouse-ear cress)).